A 930-amino-acid polypeptide reads, in one-letter code: A disintegrin and metalloproteinase with thrombospondin motifs 5 (930 aa).

A signal peptide spans 1–16 (MLLGWASLLLCAFRLP). The propeptide occupies 17-261 (LAAVGPAATP…PQTWWRRRRR (245 aa)). Disordered stretches follow at residues 24–69 (ATPA…QRRR) and 206–231 (RASC…PSGR). Over residues 31–42 (AGQPPTAAAAAQ) the composition is skewed to low complexity. Residues 46–59 (RQGEEVQERAEPPG) show a composition bias toward basic and acidic residues. Positions 207-214 (ASCETPAS) match the Cysteine switch motif. A Zn(2+)-binding site is contributed by Cys209. Residues 267-476 (RQVELLLVAD…GHGNCLLDLP (210 aa)) form the Peptidase M12B domain. Cystine bridges form between Cys342-Cys394, Cys371-Cys376, Cys388-Cys471, Cys426-Cys455, Cys497-Cys519, Cys508-Cys529, Cys514-Cys548, and Cys542-Cys553. A Zn(2+)-binding site is contributed by His410. Glu411 is a catalytic residue. Residues His414 and His420 each coordinate Zn(2+). A Disintegrin domain is found at 485-566 (ELPGQTYDAT…TKKKYYSTSS (82 aa)). An N-linked (GlcNAc...) asparagine glycan is attached at Asn498. Residues 567-622 (HGNWGSWGSWGQCSRSCGGGVQFAYRHCNNPAPRNNGRYCTGKRAIYRSCSLMPCP) enclose the TSP type-1 1 domain. C-linked (Man) tryptophan glycosylation is found at Trp570 and Trp573. Disulfide bonds link Cys579–Cys616, Cys583–Cys621, and Cys594–Cys606. Ser582 is a glycosylation site (O-linked (Fuc...) serine). Asn728, Asn802, and Asn807 each carry an N-linked (GlcNAc...) asparagine glycan. The tract at residues 732–874 (TKIVGTFNKK…HGSNKVGSHT (143 aa)) is spacer. A TSP type-1 2 domain is found at 875–929 (SQPQWVTGPWLACSRTCDTGWHTRTVQCQDGNRKLAKGCPLSQRPSAFKQCLLKK).

Zn(2+) serves as cofactor. In terms of processing, the precursor is cleaved by furin and PCSK7 outside of the cell. Glycosylated. Can be O-fucosylated by POFUT2 on a serine or a threonine residue found within the consensus sequence C1-X(2)-(S/T)-C2-G of the TSP type-1 repeat domains where C1 and C2 are the first and second cysteine residue of the repeat, respectively. Fucosylated repeats can then be further glycosylated by the addition of a beta-1,3-glucose residue by the glucosyltransferase, B3GALTL. Fucosylation mediates the efficient secretion of ADAMTS family members. Can also be C-glycosylated with one or two mannose molecules on tryptophan residues within the consensus sequence W-X-X-W of the TPRs, and N-glycosylated. These other glycosylations can also facilitate secretion. As to expression, expressed at low level in placenta primarily but also detected in heart and brain, cervix, uterus, bladder, esophagus, rib cartilage, chondroblastoma, fibrous tissue and a joint capsule from an arthritic patient.

It localises to the secreted. Its subcellular location is the extracellular space. The protein resides in the extracellular matrix. Functionally, metalloproteinase that plays an important role in connective tissue organization, development, inflammation and cell migration. Extracellular matrix (ECM) degrading enzyme that show proteolytic activity toward the hyalectan group of chondroitin sulfate proteoglycans (CSPGs) including ACAN, VCAN, BCAN and NCAN. Cleavage within the hyalectans occurs at Glu-Xaa recognition motifs. Plays a role in embryonic development, including limb and cardiac morphogenesis, and skeletal muscle development through its VCAN remodeling properties. Cleaves VCAN in the pericellular matrix surrounding myoblasts, facilitating myoblast contact and fusion which is required for skeletal muscle development and regeneration. Participates in development of brown adipose tissue and browning of white adipose tissue. Plays an important role for T-lymphocyte migration from draining lymph nodes following viral infection. The protein is A disintegrin and metalloproteinase with thrombospondin motifs 5 (ADAMTS5) of Homo sapiens (Human).